Consider the following 1356-residue polypeptide: Vascular endothelial growth factor receptor 2 (1356 aa).

A signal peptide spans 1 to 19; the sequence is MQSKVLLAVALWLCVETRA. At 20 to 764 the chain is on the extracellular side; that stretch reads ASVGLPSVSL…EGAQEKTNLE (745 aa). Asn46, Asn66, Asn96, Asn143, Asn158, and Asn245 each carry an N-linked (GlcNAc...) asparagine glycan. Ig-like C2-type domains lie at 46-110, 141-207, 224-320, 328-414, 421-548, 551-660, and 667-753; these read NTTL…ETDL, NKNK…INDE, YDVV…KNST, PFVA…HVVS, PQIG…FHVT, PEIT…RQLT, and PTIT…AFFI. Cys53 and Cys103 form a disulfide bridge. Cysteines 150 and 200 form a disulfide. The cysteines at positions 246 and 307 are disulfide-linked. Asn318, Asn374, Asn395, Asn511, Asn523, Asn580, Asn613, Asn619, Asn631, Asn675, Asn704, and Asn721 each carry an N-linked (GlcNAc...) asparagine glycan. 2 disulfides stabilise this stretch: Cys445-Cys530 and Cys571-Cys642. Cys688 and Cys737 are oxidised to a cystine. The chain crosses the membrane as a helical span at residues 765–785; the sequence is IIILVGTAVIAMFFWLLLVII. Residues 786 to 1356 are Cytoplasmic-facing; sequence LRTVKRANGG…SGTTLSSPPV (571 aa). Position 801 is a phosphotyrosine (Tyr801). One can recognise a Protein kinase domain in the interval 834 to 1162; it reads LKLGKPLGRG…FSELVEHLGN (329 aa). Residues 840–848 and Lys868 each bind ATP; that span reads LGRGAFGQV. Tyr951 carries the phosphotyrosine; by autocatalysis modification. 2 positions are modified to phosphoserine: Ser982 and Ser984. Tyr996 is modified (phosphotyrosine; by autocatalysis). A disulfide bridge connects residues Cys1024 and Cys1045. Asp1028 (proton acceptor) is an active-site residue. Phosphotyrosine; by autocatalysis occurs at positions 1054, 1059, 1175, and 1214. A phosphoserine mark is found at Ser1231 and Ser1235. A Phosphothreonine modification is found at Thr1238. The segment at 1274-1318 is disordered; the sequence is DRTKLSPSFGGMVPSKSRESVASEGSNQTSGYQSGYHSDDTDTTV. Positions 1296 to 1309 are enriched in polar residues; it reads SEGSNQTSGYQSGY. Tyr1305, Tyr1309, and Tyr1319 each carry phosphotyrosine; by autocatalysis.

Belongs to the protein kinase superfamily. Tyr protein kinase family. CSF-1/PDGF receptor subfamily. Homodimer in the presence of bound dimeric VEGFA, VEGFC or VEGFD ligands; monomeric in the absence of bound ligands. Can also form heterodimers with FLT1/VEGFR1 and KDR/VEGFR2. Interacts (tyrosine phosphorylated) with LFYN, NCK1, PLCG1. Interacts (tyrosine-phosphorylated active form preferentially) with DAB2IP (via C2 domain and active form preferentially); the interaction occurs at the late phase of VEGFA response and inhibits KDR/VEGFR2 activity. Interacts with SHBSH2D2A/TSAD, GRB2, MYOF, CBL and PDCD6. Interacts (via C-terminus domain) with ERN1 (via kinase domain); the interaction is facilitated in a XBP1 isoform 1- and vascular endothelial growth factor (VEGF)-dependent manner in endothelial cells. Interacts (via juxtamembrane region) with chaperone PDCL3 (via thioredoxin fold region); the interaction leads to increased KDR/VEGFR2 abundance through inhibition of its ubiquitination and degradation. Interacts (tyrosine phosphorylated) with CCDC88A/GIV (via SH2-like region); binding requires autophosphorylation of the KDR/VEGFR2 C-terminal region. Interacts with isoform 2 of BSG. Interacts with SLC31A1; this interaction is induced upon VEGFA stimulation leading to SLC31A1 and KDR subsequent co-internalization to early endosomes, thereby activating KDR downstream signaling in endothelial cells. As to quaternary structure, (Microbial infection) Interacts with HIV-1 Tat. N-glycosylated. In terms of processing, ubiquitinated. Tyrosine phosphorylation of the receptor promotes its poly-ubiquitination, leading to its degradation via the proteasome or lysosomal proteases. Post-translationally, autophosphorylated on tyrosine residues upon ligand binding. Autophosphorylation occurs in trans, i.e. one subunit of the dimeric receptor phosphorylates tyrosine residues on the other subunit. Phosphorylation at Tyr-951 is important for interaction with SH2D2A/TSAD and VEGFA-mediated reorganization of the actin cytoskeleton. Phosphorylation at Tyr-1175 is important for interaction with PLCG1 and SHB. Phosphorylation at Tyr-1214 is important for interaction with NCK1 and FYN. Dephosphorylated by PTPRB. Dephosphorylated by PTPRJ at Tyr-951, Tyr-996, Tyr-1054, Tyr-1059, Tyr-1175 and Tyr-1214. The inhibitory disulfide bond between Cys-1024 and Cys-1045 may serve as a specific molecular switch for H(2)S-induced modification that regulates KDR/VEGFR2 function. Detected in cornea (at protein level). Widely expressed.

It localises to the cell junction. The protein resides in the endoplasmic reticulum. Its subcellular location is the cell membrane. The protein localises to the cytoplasm. It is found in the nucleus. It localises to the cytoplasmic vesicle. The protein resides in the early endosome. Its subcellular location is the secreted. The catalysed reaction is L-tyrosyl-[protein] + ATP = O-phospho-L-tyrosyl-[protein] + ADP + H(+). With respect to regulation, present in an inactive conformation in the absence of bound ligand. Binding of VEGFA, VEGFC or VEGFD leads to dimerization and activation by autophosphorylation on tyrosine residues. Inhibited by the small molecule PTK inhibitor SU5614 ((3Z)-5-Chloro-3-[(3,5-dimethyl-1H-pyrrol-2-yl)methylene]-1,3-dihydro-2H-indol-2-one). May be regulated by hydrogen sulfide (H(2)S) levels via a H(2)S-sensitive intracellular disulfide bond. Tyrosine-protein kinase that acts as a cell-surface receptor for VEGFA, VEGFC and VEGFD. Plays an essential role in the regulation of angiogenesis, vascular development, vascular permeability, and embryonic hematopoiesis. Promotes proliferation, survival, migration and differentiation of endothelial cells. Promotes reorganization of the actin cytoskeleton. Isoforms lacking a transmembrane domain, such as isoform 2 and isoform 3, may function as decoy receptors for VEGFA, VEGFC and/or VEGFD. Isoform 2 plays an important role as negative regulator of VEGFA- and VEGFC-mediated lymphangiogenesis by limiting the amount of free VEGFA and/or VEGFC and preventing their binding to FLT4. Modulates FLT1 and FLT4 signaling by forming heterodimers. Binding of vascular growth factors to isoform 1 leads to the activation of several signaling cascades. Activation of PLCG1 leads to the production of the cellular signaling molecules diacylglycerol and inositol 1,4,5-trisphosphate and the activation of protein kinase C. Mediates activation of MAPK1/ERK2, MAPK3/ERK1 and the MAP kinase signaling pathway, as well as of the AKT1 signaling pathway. Mediates phosphorylation of PIK3R1, the regulatory subunit of phosphatidylinositol 3-kinase, reorganization of the actin cytoskeleton and activation of PTK2/FAK1. Required for VEGFA-mediated induction of NOS2 and NOS3, leading to the production of the signaling molecule nitric oxide (NO) by endothelial cells. Phosphorylates PLCG1. Promotes phosphorylation of FYN, NCK1, NOS3, PIK3R1, PTK2/FAK1 and SRC. The polypeptide is Vascular endothelial growth factor receptor 2 (Homo sapiens (Human)).